The following is an 84-amino-acid chain: Esculentin-1Vb (84 aa).

The N-terminal stretch at Met-1–Cys-22 is a signal peptide. Residues Glu-23–Thr-36 constitute a propeptide that is removed on maturation. Cys-78 and Cys-84 are disulfide-bonded.

As to expression, expressed by the skin glands.

Its subcellular location is the secreted. In terms of biological role, antimicrobial peptide. The sequence is that of Esculentin-1Vb from Odorrana versabilis (Chinese bamboo leaf odorous frog).